Consider the following 209-residue polypeptide: Thiamine-phosphate synthase (209 aa).

Residues 38–42 (QYRDK) and Asn-70 each bind 4-amino-2-methyl-5-(diphosphooxymethyl)pyrimidine. Residues Asp-71 and Asp-89 each coordinate Mg(2+). Residue Thr-108 coordinates 4-amino-2-methyl-5-(diphosphooxymethyl)pyrimidine. Position 135 to 137 (135 to 137 (SNT)) interacts with 2-[(2R,5Z)-2-carboxy-4-methylthiazol-5(2H)-ylidene]ethyl phosphate. 4-amino-2-methyl-5-(diphosphooxymethyl)pyrimidine is bound at residue Lys-138. Gly-165 contributes to the 2-[(2R,5Z)-2-carboxy-4-methylthiazol-5(2H)-ylidene]ethyl phosphate binding site.

Belongs to the thiamine-phosphate synthase family. Mg(2+) is required as a cofactor.

The catalysed reaction is 2-[(2R,5Z)-2-carboxy-4-methylthiazol-5(2H)-ylidene]ethyl phosphate + 4-amino-2-methyl-5-(diphosphooxymethyl)pyrimidine + 2 H(+) = thiamine phosphate + CO2 + diphosphate. It carries out the reaction 2-(2-carboxy-4-methylthiazol-5-yl)ethyl phosphate + 4-amino-2-methyl-5-(diphosphooxymethyl)pyrimidine + 2 H(+) = thiamine phosphate + CO2 + diphosphate. The enzyme catalyses 4-methyl-5-(2-phosphooxyethyl)-thiazole + 4-amino-2-methyl-5-(diphosphooxymethyl)pyrimidine + H(+) = thiamine phosphate + diphosphate. It participates in cofactor biosynthesis; thiamine diphosphate biosynthesis; thiamine phosphate from 4-amino-2-methyl-5-diphosphomethylpyrimidine and 4-methyl-5-(2-phosphoethyl)-thiazole: step 1/1. Functionally, condenses 4-methyl-5-(beta-hydroxyethyl)thiazole monophosphate (THZ-P) and 2-methyl-4-amino-5-hydroxymethyl pyrimidine pyrophosphate (HMP-PP) to form thiamine monophosphate (TMP). This Ectopseudomonas mendocina (strain ymp) (Pseudomonas mendocina) protein is Thiamine-phosphate synthase.